Here is a 435-residue protein sequence, read N- to C-terminus: Trigger factor (435 aa).

Residues 161–246 form the PPIase FKBP-type domain; the sequence is GKRVSIDFVG…VNKVEARELP (86 aa).

This sequence belongs to the FKBP-type PPIase family. Tig subfamily.

Its subcellular location is the cytoplasm. The catalysed reaction is [protein]-peptidylproline (omega=180) = [protein]-peptidylproline (omega=0). In terms of biological role, involved in protein export. Acts as a chaperone by maintaining the newly synthesized protein in an open conformation. Functions as a peptidyl-prolyl cis-trans isomerase. This Vibrio campbellii (strain ATCC BAA-1116) protein is Trigger factor.